Reading from the N-terminus, the 599-residue chain is ATP-dependent zinc metalloprotease FtsH 3 (599 aa).

The Cytoplasmic portion of the chain corresponds to Met1–Asn7. Residues Ile8 to Ile28 form a helical membrane-spanning segment. Topologically, residues Gly29–Ser128 are extracellular. Residues Ile129 to Ala149 form a helical membrane-spanning segment. Residues Ile150–Lys599 lie on the Cytoplasmic side of the membrane. Gly214–Thr221 contributes to the ATP binding site. His436 contacts Zn(2+). Residue Glu437 is part of the active site. His440 and Asp512 together coordinate Zn(2+).

In the central section; belongs to the AAA ATPase family. The protein in the C-terminal section; belongs to the peptidase M41 family. As to quaternary structure, homohexamer. It depends on Zn(2+) as a cofactor.

It is found in the cell membrane. Acts as a processive, ATP-dependent zinc metallopeptidase for both cytoplasmic and membrane proteins. Plays a role in the quality control of integral membrane proteins. This Phytoplasma mali (strain AT) protein is ATP-dependent zinc metalloprotease FtsH 3.